The primary structure comprises 125 residues: uncharacterized protein (125 aa).

Disordered regions lie at residues 1–27 (MNKTVGPPTITPTGLSGGMNSTTGSSS) and 76–125 (NKNN…RFKK). Residues 18–27 (GMNSTTGSSS) show a composition bias toward low complexity.

This is an uncharacterized protein from Dictyostelium discoideum (Social amoeba).